The primary structure comprises 424 residues: Phosphoribosylamine--glycine ligase (424 aa).

The ATP-grasp domain maps to 111–312 (KAFVKECGIK…LLDLFLATAK (202 aa)). Residue 137–189 (IQNASFPLVIKALNKNTSIVHHQEEALKILEDALKQSNEPVIIEPFLEGFELS) coordinates ATP.

The protein belongs to the GARS family.

It catalyses the reaction 5-phospho-beta-D-ribosylamine + glycine + ATP = N(1)-(5-phospho-beta-D-ribosyl)glycinamide + ADP + phosphate + H(+). The protein operates within purine metabolism; IMP biosynthesis via de novo pathway; N(1)-(5-phospho-D-ribosyl)glycinamide from 5-phospho-alpha-D-ribose 1-diphosphate: step 2/2. This Helicobacter pylori (strain J99 / ATCC 700824) (Campylobacter pylori J99) protein is Phosphoribosylamine--glycine ligase (purD).